Reading from the N-terminus, the 59-residue chain is Conotoxin mr5a (59 aa).

The signal sequence occupies residues 1–22; the sequence is MRCLPVFVILLLLIASAPSVDA. Residues 23 to 48 constitute a propeptide that is removed on maturation; sequence RPKTKDDMPLASFHDNAKRILQILQD.

In terms of processing, contains 2 disulfide bonds that can be either 'C1-C3, C2-C4' or 'C1-C4, C2-C3', since these disulfide connectivities have been observed for conotoxins with cysteine framework V (for examples, see AC P0DQQ7 and AC P81755). Expressed by the venom duct.

It localises to the secreted. The chain is Conotoxin mr5a from Conus marmoreus (Marble cone).